A 480-amino-acid chain; its full sequence is Zinc finger protein ztf-16 (480 aa).

The C2H2-type 1 zinc-finger motif lies at N5–H27. The disordered stretch occupies residues E25–H75. Positions S34 to I45 are enriched in polar residues. Positions R59–S69 are enriched in pro residues. 5 consecutive C2H2-type zinc fingers follow at residues H103–H125, Y133–H155, Y161–H183, F190–H215, and A223–H246. 3 disordered regions span residues Q243–A275, E290–P311, and T376–E417. The segment covering T244 to P259 has biased composition (basic and acidic residues). 2 stretches are compositionally biased toward low complexity: residues S292–S305 and T376–L403. Residues T404–E413 are compositionally biased toward basic and acidic residues. 2 C2H2-type zinc fingers span residues V420–H442 and F448–H472.

The protein belongs to the Ikaros C2H2-type zinc-finger protein family. As to expression, expressed in the somatic gonad, hypodermis and cells in the head and tail. Expressed in amphid and phasmid sheath glia, amphid and phasmid socket glia, and in neurons in the head.

Its subcellular location is the nucleus. Positively regulates the expression of ver-1 in the amphid sheath glia of amphid sensory neurons. Together with ehn-3, plays a role in somatic gonad development and is required for proper gonadal primordium assembly and somatic gonad precursor cell morphology. In Caenorhabditis elegans, this protein is Zinc finger protein ztf-16.